Consider the following 664-residue polypeptide: Semaphorin-7A (664 aa).

Positions Met1–Ala44 are cleaved as a signal peptide. In terms of domain architecture, Sema spans Arg53–Leu488. N-linked (GlcNAc...) asparagine glycosylation is present at Asn102. The cysteines at positions 117 and 123 are disulfide-linked. Arg132 is subject to Asymmetric dimethylarginine. Cys140 and Cys149 form a disulfide bridge. N-linked (GlcNAc...) asparagine glycosylation is found at Asn154 and Asn256. Intrachain disulfides connect Cys264–Cys364, Cys289–Cys333, Cys491–Cys509, Cys498–Cys539, Cys501–Cys516, Cys564–Cys611, and Cys585–Cys594. The interval Arg265–Asp267 is interaction with integrins. The Cell attachment site signature appears at Arg265 to Asp267. An N-linked (GlcNAc...) asparagine glycan is attached at Asn328. An Ig-like C2-type domain is found at Pro542–Leu627. Residue Asn600 is glycosylated (N-linked (GlcNAc...) asparagine). The GPI-anchor amidated alanine moiety is linked to residue Ala646. Positions Ala647–His664 are cleaved as a propeptide — removed in mature form.

The protein belongs to the semaphorin family. In terms of assembly, interacts with PLXNC1. Interacts with ITGA1 and ITGB1. As to expression, highly expressed in activated T-cells (at protein level). Highest expression in brain. Lower in heart, thymus, spleen, testis and ovary. The expression increases in late embryonic and postnatal stages. Detected in T-cells.

It is found in the cell membrane. Plays an important role in integrin-mediated signaling and functions both in regulating cell migration and immune responses. Promotes formation of focal adhesion complexes, activation of the protein kinase PTK2/FAK1 and subsequent phosphorylation of MAPK1 and MAPK3. Promotes production of pro-inflammatory cytokines by monocytes and macrophages. Plays an important role in modulating inflammation and T-cell-mediated immune responses. Promotes axon growth in the embryonic olfactory bulb. Promotes attachment, spreading and dendrite outgrowth in melanocytes. This Mus musculus (Mouse) protein is Semaphorin-7A (Sema7a).